A 281-amino-acid polypeptide reads, in one-letter code: Transcription factor E2F6 (281 aa).

Residue lysine 9 forms a Glycyl lysine isopeptide (Lys-Gly) (interchain with G-Cter in SUMO2) linkage. Residues 50–129 (YVSMRKALKV…SKNHIRWIGS (80 aa)) mediate DNA binding. The short motif at 95 to 129 (KLGVRKRRVYDITNVLDGIDLVEKKSKNHIRWIGS) is the DEF box element. The tract at residues 130-222 (DLSNFGAVPQ…PAPREDSITV (93 aa)) is dimerization. Positions 143–164 (LQEELSDLSAMEDALDELIKDC) are leucine-zipper. The segment at 173-281 (DDKENERLAY…QSEELLEVSN (109 aa)) is transcription repression. Residues 241–281 (GQTSNKRSEGVGTSSSESTHPEGPEEEENPQQSEELLEVSN) are disordered.

The protein belongs to the E2F/DP family. In terms of assembly, forms heterodimers with DP family members TFDP1 or TFDP2. Component of the DRTF1/E2F transcription factor complex. Part of the E2F6.com-1 complex in G0 phase composed of E2F6, MGA, MAX, TFDP1, CBX3, BAT8, EUHMTASE1, RING1, RNF2, MBLR, L3MBTL2 and YAF2. Component of some MLL1/MLL complex, at least composed of the core components KMT2A/MLL1, ASH2L, HCFC1/HCF1, WDR5 and RBBP5, as well as the facultative components BACC1, CHD8, E2F6, HSP70, INO80C, KANSL1, LAS1L, MAX, MCRS1, MGA, KAT8/MOF, PELP1, PHF20, PRP31, RING2, RUVB1/TIP49A, RUVB2/TIP49B, SENP3, TAF1, TAF4, TAF6, TAF7, TAF9 and TEX10. Expressed in all tissues examined. Highest levels in placenta, skeletal muscle, heart, ovary, kidney, small intestine and spleen.

Its subcellular location is the nucleus. Functionally, inhibitor of E2F-dependent transcription. Binds DNA cooperatively with DP proteins through the E2 recognition site, 5'-TTTC[CG]CGC-3'. Has a preference for the 5'-TTTCCCGC-3' E2F recognition site. E2F6 lacks the transcriptional activation and pocket protein binding domains. Appears to regulate a subset of E2F-dependent genes whose products are required for entry into the cell cycle but not for normal cell cycle progression. Represses expression of some meiosis-specific genes, including SLC25A31/ANT4. May silence expression via the recruitment of a chromatin remodeling complex containing histone H3-K9 methyltransferase activity. Overexpression delays the exit of cells from the S-phase. The sequence is that of Transcription factor E2F6 from Homo sapiens (Human).